A 160-amino-acid polypeptide reads, in one-letter code: Putative antiporter subunit mnhE2 (160 aa).

The next 3 helical transmembrane spans lie at Ser22–Leu42, Phe61–Leu81, and Trp102–Ile122.

The protein belongs to the CPA3 antiporters (TC 2.A.63) subunit E family. May form a heterooligomeric complex that consists of seven subunits: mnhA2, mnhB2, mnhC2, mnhD2, mnhE2, mnhF2 and mnhG2.

The protein resides in the cell membrane. This chain is Putative antiporter subunit mnhE2 (mnhE2), found in Staphylococcus haemolyticus (strain JCSC1435).